Reading from the N-terminus, the 498-residue chain is TORTIFOLIA1-like protein 5 (498 aa).

HEAT repeat units follow at residues E56–D93, P97–G134, P136–E173, E177–G214, and K219–E257. Positions E296 to E423 are disordered. The span at T300 to K322 shows a compositional bias: low complexity. Positions N343–E366 are enriched in basic and acidic residues. Polar residues predominate over residues N390 to S400. S426 bears the Phosphoserine mark.

This chain is TORTIFOLIA1-like protein 5, found in Arabidopsis thaliana (Mouse-ear cress).